The sequence spans 199 residues: Peptidyl-tRNA hydrolase (199 aa).

Tyrosine 15 is a tRNA binding site. Histidine 20 acts as the Proton acceptor in catalysis. Phenylalanine 66, asparagine 68, and asparagine 114 together coordinate tRNA.

Belongs to the PTH family. Monomer.

It is found in the cytoplasm. The enzyme catalyses an N-acyl-L-alpha-aminoacyl-tRNA + H2O = an N-acyl-L-amino acid + a tRNA + H(+). In terms of biological role, hydrolyzes ribosome-free peptidyl-tRNAs (with 1 or more amino acids incorporated), which drop off the ribosome during protein synthesis, or as a result of ribosome stalling. Its function is as follows. Catalyzes the release of premature peptidyl moieties from peptidyl-tRNA molecules trapped in stalled 50S ribosomal subunits, and thus maintains levels of free tRNAs and 50S ribosomes. This is Peptidyl-tRNA hydrolase from Cupriavidus pinatubonensis (strain JMP 134 / LMG 1197) (Cupriavidus necator (strain JMP 134)).